Reading from the N-terminus, the 310-residue chain is Haloalkane dehalogenase (310 aa).

Residues 49–295 enclose the AB hydrolase-1 domain; it reads VFLCLHGEPT…DAGHFVQEFG (247 aa). Catalysis depends on aspartate 124, which acts as the Nucleophile. Chloride contacts are provided by tryptophan 125 and tryptophan 175. Aspartate 260 acts as the Proton donor in catalysis. Residue histidine 289 is the Proton acceptor of the active site.

It belongs to the haloalkane dehalogenase family. Type 1 subfamily. As to quaternary structure, monomer.

The enzyme catalyses 1-haloalkane + H2O = a halide anion + a primary alcohol + H(+). It carries out the reaction 1,2-dichloroethane + H2O = 2-chloroethanol + chloride + H(+). It participates in xenobiotic degradation; 1,2-dichloroethane degradation; glycolate from 1,2-dichloroethane: step 1/4. Its activity is regulated as follows. Inhibited by thiol reagents such as p-chloromercuribenzoate and iodoacetamide. Its function is as follows. Catalyzes hydrolytic cleavage of carbon-halogen bonds in halogenated aliphatic compounds, leading to the formation of the corresponding primary alcohols, halide ions and protons. Has a broad substrate specificity, which includes terminally mono- and di- chlorinated and brominated alkanes (up to C4 only). The highest activity was found with 1,2-dichloroethane, 1,3-dichloropropane, and 1,2-dibromoethane. The protein is Haloalkane dehalogenase (dhlA) of Xanthobacter autotrophicus.